A 434-amino-acid polypeptide reads, in one-letter code: Chaperone SurA (434 aa).

The signal sequence occupies residues M1–A22. PpiC domains follow at residues D173–D274 and I283–E383.

It localises to the periplasm. The enzyme catalyses [protein]-peptidylproline (omega=180) = [protein]-peptidylproline (omega=0). In terms of biological role, chaperone involved in the correct folding and assembly of outer membrane proteins. Recognizes specific patterns of aromatic residues and the orientation of their side chains, which are found more frequently in integral outer membrane proteins. May act in both early periplasmic and late outer membrane-associated steps of protein maturation. This Shewanella oneidensis (strain ATCC 700550 / JCM 31522 / CIP 106686 / LMG 19005 / NCIMB 14063 / MR-1) protein is Chaperone SurA.